Reading from the N-terminus, the 662-residue chain is PAN2-PAN3 deadenylation complex subunit PAN3 (662 aa).

Disordered stretches follow at residues M1 to N26 and T59 to T131. The C3H1-type zinc finger occupies N26–H55. The span at D72–G85 shows a compositional bias: polar residues. Positions S86–S102 are enriched in low complexity. The segment covering R114 to S126 has biased composition (polar residues). A pseudokinase domain region spans residues Q265–S525. Residues R317, D366 to T373, and S425 to K426 each bind ATP. The stretch at S526–F564 forms a coiled coil. The segment at V565–H662 is knob domain.

The protein belongs to the protein kinase superfamily. PAN3 family. As to quaternary structure, homodimer. Forms a heterotrimer with a catalytic subunit pan2 to form the poly(A)-nuclease (PAN) deadenylation complex. Interacts (via PAM-2 motif) with poly(A)-binding protein pab1 (via PABC domain), conferring substrate specificity of the enzyme complex.

The protein resides in the cytoplasm. In terms of biological role, regulatory subunit of the poly(A)-nuclease (PAN) deadenylation complex, one of two cytoplasmic mRNA deadenylases involved in mRNA turnover. PAN specifically shortens poly(A) tails of RNA and the activity is stimulated by poly(A)-binding protein pab1. PAN deadenylation is followed by rapid degradation of the shortened mRNA tails by the CCR4-NOT complex. Deadenylated mRNAs are then degraded by two alternative mechanisms, namely exosome-mediated 3'-5' exonucleolytic degradation, or deadenylation-dependent mRNA decaping and subsequent 5'-3' exonucleolytic degradation by xrn1. May also be involved in post-transcriptional maturation of mRNA poly(A) tails. pan3 acts as a positive regulator for PAN activity, recruiting the catalytic subunit pan2 to mRNA via its interaction with RNA and with pab1. This chain is PAN2-PAN3 deadenylation complex subunit PAN3, found in Aspergillus oryzae (strain ATCC 42149 / RIB 40) (Yellow koji mold).